The following is a 302-amino-acid chain: Ribosomal RNA small subunit methyltransferase H (302 aa).

Residues 32–34 (GGH), Asp-51, Phe-78, Asp-97, and Gln-104 contribute to the S-adenosyl-L-methionine site.

This sequence belongs to the methyltransferase superfamily. RsmH family.

Its subcellular location is the cytoplasm. It carries out the reaction cytidine(1402) in 16S rRNA + S-adenosyl-L-methionine = N(4)-methylcytidine(1402) in 16S rRNA + S-adenosyl-L-homocysteine + H(+). In terms of biological role, specifically methylates the N4 position of cytidine in position 1402 (C1402) of 16S rRNA. The sequence is that of Ribosomal RNA small subunit methyltransferase H from Nitratiruptor sp. (strain SB155-2).